The primary structure comprises 267 residues: Phosphate import ATP-binding protein PstB (267 aa).

Residues 21–262 (VAARNLDFYY…PSKQQTEDYI (242 aa)) enclose the ABC transporter domain. Position 53–60 (53–60 (GPSGCGKS)) interacts with ATP.

This sequence belongs to the ABC transporter superfamily. Phosphate importer (TC 3.A.1.7) family. As to quaternary structure, the complex is composed of two ATP-binding proteins (PstB), two transmembrane proteins (PstC and PstA) and a solute-binding protein (PstS).

Its subcellular location is the cell inner membrane. It catalyses the reaction phosphate(out) + ATP + H2O = ADP + 2 phosphate(in) + H(+). Functionally, part of the ABC transporter complex PstSACB involved in phosphate import. Responsible for energy coupling to the transport system. The sequence is that of Phosphate import ATP-binding protein PstB from Xanthomonas oryzae pv. oryzae (strain MAFF 311018).